The following is a 196-amino-acid chain: ATP-dependent Clp protease proteolytic subunit (196 aa).

Serine 101 acts as the Nucleophile in catalysis. The active site involves histidine 126.

Belongs to the peptidase S14 family. Component of the chloroplastic Clp protease core complex.

Its subcellular location is the plastid. It is found in the chloroplast stroma. It catalyses the reaction Hydrolysis of proteins to small peptides in the presence of ATP and magnesium. alpha-casein is the usual test substrate. In the absence of ATP, only oligopeptides shorter than five residues are hydrolyzed (such as succinyl-Leu-Tyr-|-NHMec, and Leu-Tyr-Leu-|-Tyr-Trp, in which cleavage of the -Tyr-|-Leu- and -Tyr-|-Trp bonds also occurs).. Cleaves peptides in various proteins in a process that requires ATP hydrolysis. Has a chymotrypsin-like activity. Plays a major role in the degradation of misfolded proteins. This is ATP-dependent Clp protease proteolytic subunit from Spinacia oleracea (Spinach).